We begin with the raw amino-acid sequence, 69 residues long: Large ribosomal subunit protein bL31 (69 aa).

Cys17, Cys19, Cys37, and Cys40 together coordinate Zn(2+).

This sequence belongs to the bacterial ribosomal protein bL31 family. Type A subfamily. Part of the 50S ribosomal subunit. The cofactor is Zn(2+).

In terms of biological role, binds the 23S rRNA. The chain is Large ribosomal subunit protein bL31 from Caldicellulosiruptor saccharolyticus (strain ATCC 43494 / DSM 8903 / Tp8T 6331).